We begin with the raw amino-acid sequence, 145 residues long: Galectin-5 (145 aa).

Serine 2 is subject to N-acetylserine. The region spanning 17-145 is the Galectin domain; it reads FFTSIPNGLY…GDIQLTHVET (129 aa). 77 to 83 is an a beta-D-galactoside binding site; that stretch reads WGPEERS.

In terms of assembly, monomer. In terms of tissue distribution, erythrocytes.

Functionally, may function in erythrocyte differentiation. The polypeptide is Galectin-5 (Lgals5) (Rattus norvegicus (Rat)).